A 111-amino-acid polypeptide reads, in one-letter code: Cell cycle protein GpsB (111 aa).

Residues 38–72 (IKDYEAFHKEFEQLKQQNARLKRELEEQKLAATQV) adopt a coiled-coil conformation.

This sequence belongs to the GpsB family. In terms of assembly, forms polymers through the coiled coil domains. Interacts with PBP1, MreC and EzrA.

The protein localises to the cytoplasm. Functionally, divisome component that associates with the complex late in its assembly, after the Z-ring is formed, and is dependent on DivIC and PBP2B for its recruitment to the divisome. Together with EzrA, is a key component of the system that regulates PBP1 localization during cell cycle progression. Its main role could be the removal of PBP1 from the cell pole after pole maturation is completed. Also contributes to the recruitment of PBP1 to the division complex. Not essential for septum formation. The polypeptide is Cell cycle protein GpsB (Bacillus cereus (strain ATCC 10987 / NRS 248)).